Here is a 342-residue protein sequence, read N- to C-terminus: S-adenosyl-L-methionine-dependent tRNA 4-demethylwyosine synthase (342 aa).

6 residues coordinate [4Fe-4S] cluster: C45, C58, C71, C81, C85, and C88. Residues 64–312 (YGIHSHRCLQ…VKHLPGYHIE (249 aa)) enclose the Radical SAM core domain.

The protein belongs to the TYW1 family. In terms of assembly, monomer. It depends on [4Fe-4S] cluster as a cofactor.

The protein localises to the cytoplasm. It carries out the reaction N(1)-methylguanosine(37) in tRNA(Phe) + pyruvate + S-adenosyl-L-methionine = 4-demethylwyosine(37) in tRNA(Phe) + 5'-deoxyadenosine + L-methionine + CO2 + H2O. Its function is as follows. Component of the wyosine derivatives biosynthesis pathway that catalyzes the condensation of N-methylguanine with 2 carbon atoms from pyruvate to form the tricyclic 4-demethylwyosine (imG-14) on guanosine-37 of tRNA(Phe). In Pyrococcus abyssi (strain GE5 / Orsay), this protein is S-adenosyl-L-methionine-dependent tRNA 4-demethylwyosine synthase.